The chain runs to 943 residues: Protein translocase subunit SecA (943 aa).

ATP-binding positions include glutamine 90, 108-112, and aspartate 509; that span reads GEGKT. Residues 534–561 form a disordered region; that stretch reads KPDNEHKPPIPQQRNSKSGGGFSANVDS.

This sequence belongs to the SecA family. As to quaternary structure, monomer and homodimer. Part of the essential Sec protein translocation apparatus which comprises SecA, SecYEG and auxiliary proteins SecDF. Other proteins may also be involved.

The protein localises to the cell inner membrane. Its subcellular location is the cellular thylakoid membrane. The protein resides in the cytoplasm. The catalysed reaction is ATP + H2O + cellular proteinSide 1 = ADP + phosphate + cellular proteinSide 2.. Functionally, part of the Sec protein translocase complex. Interacts with the SecYEG preprotein conducting channel. Has a central role in coupling the hydrolysis of ATP to the transfer of proteins into and across the cell membrane, serving as an ATP-driven molecular motor driving the stepwise translocation of polypeptide chains across the membrane. Probably participates in protein translocation into and across both the cytoplasmic and thylakoid membranes in cyanobacterial cells. This chain is Protein translocase subunit SecA, found in Prochlorococcus marinus subsp. pastoris (strain CCMP1986 / NIES-2087 / MED4).